Consider the following 101-residue polypeptide: Thrombin-like enzyme okinaxobin-1 (101 aa).

The signal sequence occupies residues 1–16 (LIRVLANLLILQLSYA). Residues 17-22 (QKSSEL) constitute a propeptide that is removed on maturation. Residues 23 to 101 (VIGGDECNIN…PKKKYFFRCR (79 aa)) enclose the Peptidase S1 domain. Cys50 and Cys66 form a disulfide bridge. The active-site Charge relay system is the His65.

This sequence belongs to the peptidase S1 family. Snake venom subfamily. As to quaternary structure, monomer. In terms of processing, glycosylated. Expressed by the venom gland.

It is found in the secreted. Its activity is regulated as follows. Strongly inactivated by diisopropylfluorophosphate (DFP) and phenylmethanesulfonyl fluoride (PMSF), and to a lesser extent by tosyl-L-lysine chloromethyl ketone (TLCK). In terms of biological role, thrombin-like snake venom serine protease that releases specifically fibrinopeptide B from fibrinogen (FGB) to form fibrin clots. Shows a preferential cleavage at Arg-|-Gly bonds in fibrinogen beta chains. Cleaves fibrinogen beta chains preferentially to alpha chains. The polypeptide is Thrombin-like enzyme okinaxobin-1 (Ovophis okinavensis (Ryukyu Island pit viper)).